We begin with the raw amino-acid sequence, 132 residues long: Small ribosomal subunit protein uS8 (132 aa).

The protein belongs to the universal ribosomal protein uS8 family. As to quaternary structure, part of the 30S ribosomal subunit. Contacts proteins S5 and S12.

One of the primary rRNA binding proteins, it binds directly to 16S rRNA central domain where it helps coordinate assembly of the platform of the 30S subunit. This chain is Small ribosomal subunit protein uS8, found in Clostridium botulinum (strain ATCC 19397 / Type A).